We begin with the raw amino-acid sequence, 173 residues long: Putative metal-dependent hydrolase BT9727_2476 (173 aa).

Residues His-65, His-156, and His-160 each coordinate Zn(2+).

Belongs to the metal hydrolase YfiT family. As to quaternary structure, homodimer. It depends on Zn(2+) as a cofactor.

It localises to the cytoplasm. Its function is as follows. Possible metal-dependent hydrolase. The protein is Putative metal-dependent hydrolase BT9727_2476 of Bacillus thuringiensis subsp. konkukian (strain 97-27).